A 273-amino-acid polypeptide reads, in one-letter code: N(omega)-hydroxy-L-arginine amidinohydrolase (273 aa).

Residues D109, H111, D113, D198, and D200 each coordinate Mn(2+).

It belongs to the arginase family. It depends on Mn(2+) as a cofactor.

The enzyme catalyses N(omega)-hydroxy-L-arginine + H2O = hydroxyurea + L-ornithine. Functionally, involved in the biosynthesis of the antibiotic D-cycloserine (DCS), a cyclic structural analog of D-alanine, used as an antitubercular agent. Catalyzes the hydrolysis of N(omega)-hydroxy-L-arginine (NHA) to yield hydroxyurea (HU) and L-ornithine. The chain is N(omega)-hydroxy-L-arginine amidinohydrolase from Streptomyces lavendulae.